A 536-amino-acid polypeptide reads, in one-letter code: CTP synthase (536 aa).

The tract at residues 1 to 267 (MSKFVFVTGG…CKETLNYLEL (267 aa)) is amidoligase domain. CTP is bound at residue Ser-13. Residue Ser-13 coordinates UTP. ATP-binding positions include 14–19 (SIGKGI) and Asp-71. Residues Asp-71 and Glu-141 each coordinate Mg(2+). Residues 148–150 (DIE), 188–193 (KTKPTQ), and Lys-224 each bind CTP. Residues 188–193 (KTKPTQ) and Lys-224 contribute to the UTP site. The 243-residue stretch at 292–534 (KVALVGKYIE…IKASQDKLTQ (243 aa)) folds into the Glutamine amidotransferase type-1 domain. Residue Gly-354 participates in L-glutamine binding. Cys-381 acts as the Nucleophile; for glutamine hydrolysis in catalysis. L-glutamine contacts are provided by residues 382-385 (LGMQ), Glu-405, and Arg-462. Catalysis depends on residues His-507 and Glu-509.

The protein belongs to the CTP synthase family. In terms of assembly, homotetramer.

The catalysed reaction is UTP + L-glutamine + ATP + H2O = CTP + L-glutamate + ADP + phosphate + 2 H(+). It carries out the reaction L-glutamine + H2O = L-glutamate + NH4(+). It catalyses the reaction UTP + NH4(+) + ATP = CTP + ADP + phosphate + 2 H(+). The protein operates within pyrimidine metabolism; CTP biosynthesis via de novo pathway; CTP from UDP: step 2/2. Its activity is regulated as follows. Allosterically activated by GTP, when glutamine is the substrate; GTP has no effect on the reaction when ammonia is the substrate. The allosteric effector GTP functions by stabilizing the protein conformation that binds the tetrahedral intermediate(s) formed during glutamine hydrolysis. Inhibited by the product CTP, via allosteric rather than competitive inhibition. Functionally, catalyzes the ATP-dependent amination of UTP to CTP with either L-glutamine or ammonia as the source of nitrogen. Regulates intracellular CTP levels through interactions with the four ribonucleotide triphosphates. This is CTP synthase from Prochlorococcus marinus (strain MIT 9301).